A 360-amino-acid chain; its full sequence is MYRRVIKPALFRLDAEDAHHLTVNALALMSRLPGWPAAARRLSAPADSRLMQTLWGHTYASPVGLAAGLDKNGVAVPAFSALGFGFVEVGTVTPQPQPGNDRPRLFRLPPDEALINRMGFNNAGAAALRGQLSRLGRRTVPVWVNIGKNKLTEEAAQDYVACVQELYDVADAFVVNVSSPNTPGLRALQASAELEALLRAVLNETEAQRLRTARRAPPVLVKLAPDLHPADFEASVQGALNAGVQGLIVSNTTLSRDGLTHAHREQAGGLSGRPLTGRSTALVQDAYRLTRGAVPVVGVGGIFSADDAYAKIRAGASLVEVYSSLIYEGPGLPARIHRGLGQLLERDGISHVRDAVGADA.

Residues 67–71 and Thr91 contribute to the FMN site; that span reads AGLDK. Lys71 lines the substrate pocket. 116-120 lines the substrate pocket; sequence NRMGF. Residues Asn145 and Asn176 each coordinate FMN. Asn176 is a substrate binding site. Residue Ser179 is the Nucleophile of the active site. Asn181 lines the substrate pocket. Residues Lys222 and Ser250 each coordinate FMN. 251–252 serves as a coordination point for substrate; the sequence is NT. Residues Gly272, Gly301, and 322–323 contribute to the FMN site; that span reads YS.

The protein belongs to the dihydroorotate dehydrogenase family. Type 2 subfamily. In terms of assembly, monomer. Requires FMN as cofactor.

The protein resides in the cell membrane. It carries out the reaction (S)-dihydroorotate + a quinone = orotate + a quinol. It participates in pyrimidine metabolism; UMP biosynthesis via de novo pathway; orotate from (S)-dihydroorotate (quinone route): step 1/1. Its function is as follows. Catalyzes the conversion of dihydroorotate to orotate with quinone as electron acceptor. In Deinococcus deserti (strain DSM 17065 / CIP 109153 / LMG 22923 / VCD115), this protein is Dihydroorotate dehydrogenase (quinone).